The sequence spans 442 residues: Protoheme IX farnesyltransferase (442 aa).

The segment at 1–167 (MGVYSLLVLG…AYVQLMKPRL (167 aa)) is unknown. The next 11 helical transmembrane spans lie at 49–69 (AAALTGLAVVGAAVLAWRTGA), 76–96 (AVTLALALYPVQVVIGAYTAM), 106–126 (VHLTLGVGIFASLVVALAWTL), 167–187 (LMWLLCLVAGAGMALASSQLG), 194–214 (AATVVLTLGGGVLSIGASGTF), 245–265 (LAFGVVLGVASLAAFAAVNLL), 267–287 (AVLGLTAIAFYSIVYTLVLKP), 308–328 (WVAVTGAVGVGGVVLAGVIFL), 365–385 (HIVYYIGATLASAVVLAELTG), 386–406 (LGPLYAATTVLLGAVFLYFAI), and 421–441 (FHASNAYLGCLLVAVVLDTMV). The tract at residues 168–439 (MWLLCLVAGA…CLLVAVVLDT (272 aa)) is prenyltransferase.

It in the C-terminal section; belongs to the UbiA prenyltransferase family. Protoheme IX farnesyltransferase subfamily.

The protein localises to the cell membrane. It catalyses the reaction heme b + (2E,6E)-farnesyl diphosphate + H2O = Fe(II)-heme o + diphosphate. The protein operates within porphyrin-containing compound metabolism; heme O biosynthesis; heme O from protoheme: step 1/1. Converts heme B (protoheme IX) to heme O by substitution of the vinyl group on carbon 2 of heme B porphyrin ring with a hydroxyethyl farnesyl side group. The chain is Protoheme IX farnesyltransferase (ctaB) from Halobacterium salinarum (strain ATCC 700922 / JCM 11081 / NRC-1) (Halobacterium halobium).